We begin with the raw amino-acid sequence, 490 residues long: Pre-glycoprotein polyprotein GP complex (490 aa).

A lipid anchor (N-myristoyl glycine; by host) is attached at glycine 2. The Extracellular portion of the chain corresponds to 2–17; that stretch reads GQIVTFFQEVPHVIEE. The chain crosses the membrane as a helical span at residues 18–33; that stretch reads VMNIVLIALSILAILK. At 34–58 the chain is on the cytoplasmic side; it reads GLYNVATCGLIGLVTFLLLSGRSCS. Zn(2+) is bound at residue cysteine 57. The Extracellular portion of the chain corresponds to 59 to 431; the sequence is LIYKGTYELQ…QGKTPLGLVD (373 aa). Asparagine 78, asparagine 88, asparagine 98, asparagine 108, asparagine 118, and asparagine 166 each carry an N-linked (GlcNAc...) asparagine; by host glycan. 6 disulfides stabilise this stretch: cysteine 85–cysteine 230, cysteine 117–cysteine 154, cysteine 179–cysteine 211, cysteine 278–cysteine 291, cysteine 300–cysteine 309, and cysteine 363–cysteine 384. Residue asparagine 223 is glycosylated (N-linked (GlcNAc...) asparagine; by host). 4 N-linked (GlcNAc...) asparagine; by host glycosylation sites follow: asparagine 364, asparagine 372, asparagine 389, and asparagine 394. Residues 432–452 traverse the membrane as a helical segment; that stretch reads LFVFSTSFYLISIFLHLVKIP. Topologically, residues 453–490 are cytoplasmic; sequence THRHIVGKPCPKPHRLNHMGICSCGLYKQPGVPVRWKR. Zn(2+)-binding residues include histidine 454, histidine 456, cysteine 462, histidine 466, cysteine 474, and cysteine 476.

The protein belongs to the arenaviridae GPC protein family. As to quaternary structure, interacts with glycoprotein G2. Part of the GP complex (GP-C) together with glycoprotein G1 and glycoprotein G2. The GP-complex interacts with protein Z, which interacts with ribonucleocapsid; these interactions may induce virion budding. In terms of assembly, homotrimer; disulfide-linked. In pre-fusion state, G1 homotrimers bind G2 homotrimers via ionic interactions. Part of the GP complex (GP-C) together with glycoprotein G2 and the stable signal peptide. Interacts with the primary host receptor DAG1 on the cell surface; this interaction occurs at pH 8.0 but not at pH 6.0 and below. Upon virus internalization and at endosomal pH, interacts with the host lysosomal protein LAMP1; this interaction mediates G1 dissociation from GP-C and membrane fusion. The GP-complex interacts with protein Z, which interacts with ribonucleocapsid; these interactions may induce virion budding. Homotrimer. Interacts with the stable signal peptide. In pre-fusion state, G2 homotrimers bind G1 homotrimers via ionic interactions. Part of the GP complex (GP-C) together with glycoprotein G1 and the stable signal peptide. Acidification in the endosome triggers rearrangements, which ultimately leads to a 6 helix bundle formed by the two heptad repeat domains (HR1 and HR2) in post-fusion state. The GP-complex interacts with protein Z, which interacts with ribonucleocapsid; these interactions may induce virion budding. Specific enzymatic cleavages in vivo yield mature proteins. GP-C polyprotein is cleaved in the endoplasmic reticulum by the host protease MBTPS1. Only cleaved glycoprotein is incorporated into virions. In terms of processing, the SSP remains stably associated with the GP complex following cleavage by signal peptidase and plays crucial roles in the trafficking of GP through the secretory pathway. Post-translationally, myristoylation is necessary for GP2-mediated fusion activity.

The protein resides in the virion membrane. The protein localises to the host endoplasmic reticulum membrane. It is found in the host Golgi apparatus membrane. It localises to the host cell membrane. Its function is as follows. Functions as a cleaved signal peptide that is retained as the third component of the GP complex (GP-C). Helps to stabilize the spike complex in its native conformation. The SSP is required for efficient glycoprotein expression, post-translational maturation cleavage of G1 and G2, glycoprotein transport to the cell surface plasma membrane, formation of infectious virus particles, and acid pH-dependent glycoprotein-mediated cell fusion. Functionally, forms the virion spikes together with glycoprotein G2. The glycoprotein spike trimers are connected to the underlying matrix. Interacts with the host receptor. Mediates virus attachment to the host primary receptor alpha-dystroglycan DAG1 (alpha-DG) at the cell surface. This attachment induces virion internalization apparently through macropinocytosis. Following endocytosis, there is a pH-dependent switch from binding DAG1 to the host lysosomal receptor LAMP1. This latter binding triggers the dissociation of GP1, exposing the fusion subunit, GP2, such that fusion can occur. Down-modulates host DAG1. In terms of biological role, forms the virion spikes together with glycoprotein G1. The glycoprotein spike trimers are connected to the underlying matrix. Class I viral fusion protein that directs fusion of viral and host endosomal membranes, leading to delivery of the nucleocapsid into the cytoplasm. Membrane fusion is mediated by irreversible conformational changes induced by acidification. This Lassa virus (strain GA391) (LASV) protein is Pre-glycoprotein polyprotein GP complex.